The following is a 1024-amino-acid chain: MPSHTFNPQAGYDLAVDRNLGLGEIFYNRAQKSHQAIAVCDGGAVLTYGQLHAKAYRLAQELSQWLRLTEKPVGIVVQHGMADVVAQMAVIYAGGSCAPMDPTLPDNQIQGRLKRLDAVCVLTDQANRHRDLGADVLCIDDFDIADLAPEDTLYPVATNLEHCAYLIHTSGTTAEPKAVQIAARSILHVAFYAPLEPVYDTDVVAHANNSSFDVSLFDIWVPLLRGAQIAVINKAVLLDPPMMAREIDRLGITVMATTTAVLNLAAFIYPKAFAKLRLVTIGGEAANVAAIRIILKNGPPAMLFNAYGPTECCVFCLAHQITPADVEHGSIGVSIGKPVGRTITYIAGDEGGESDQGELWIGGPGVSPGYFRQPEKNLAAFSDLGEAMTSLENPVRFYRTGDIVRRRPNGALEYVGRRDHQVKVRGFRIELEAVEAGLLKTGLFSDAVAMRIEMPQNGAGSILAAYVVPTDVSKPPTMDEALESAKSILPHYMVPQLELVPRLPLNRHLKVDRKQLAELFGRRWEDVSPAQPENASQDVRSALVSLWATVLASPLSTYGDDDDFLHLGGTSLQAAMLINQIRHKFDIEVSLLTLYDNTTLGALTSIIKQRLSGQSETLHNEKDSWVADSEIADDLSCPLDRPIDWCRDTEGRVFLTGGTGFVGAFLLADLLHMPQTSQVRCLVRATDAAVGQERLRAALDKYGLWEDGFADKLVAIAGLLEDDYLGMGREQFEEAASWASVVFHLGARVNYAQPYSLHRASNTLGTRNMVRFACAGRTKAIHYVSSIGCFGPTGSILGTTSVREDEPLLPHITALPYDHGYAQSQWVADALLRRLMDRGFPIAIYRPGFIVGHSQTGACNPDDFLSRLIDACREIGCYPQLPNQRKEFVPVDYVNAAILHIAASPASLGHAYHIVPPTRAVSIDMDNSMALVDRAGNSPMRPVSYKEWVERLAATSPKRLLPLQPMLAERVKDGLTRWELYENMPVYETTNTARALQNYPGGLQFPVLDTSLMKRYLDFLEAKG.

The tract at residues 29–425 (RAQKSHQAIA…GRRDHQVKVR (397 aa)) is adenylation (A) domain. A Carrier domain is found at 534-611 (NASQDVRSAL…ALTSIIKQRL (78 aa)). S571 is subject to O-(pantetheine 4'-phosphoryl)serine. Residues 655-898 (LTGGTGFVGA…VPVDYVNAAI (244 aa)) enclose the Thioester reductase (TE) domain.

The protein belongs to the NRP synthetase family. It depends on pantetheine 4'-phosphate as a cofactor.

It carries out the reaction L-tyrosinal + AMP + diphosphate + NADP(+) = L-tyrosine + ATP + NADPH + H(+). The protein operates within secondary metabolite biosynthesis. Its function is as follows. Non-canonical nonribosomal peptide synthetase; part of the gene cluster that mediates the biosynthesis of the alkaloid (-)-FR901483, a potent immunosuppressant that shows efficacy in animal models and a probable inhibitor of purine nucleotide biosynthesis by targeting phosphoribosylpyrophosphate amidotransferase (PPAT). Within the pathway, FrzA catalyzes the reduction of L-tyrosine via its C-terminal reductase domain to produce L-tyrosinal. The biosynthesis of (-)-FR901483 starts with the condensation of two L-tyrosines to yield (S,S)-dityrosyl-piperazine. This process occurs in 3 steps with the non-canonical nonribosomal peptide synthetase FrzA catalyzing the reduction of L-tyrosine into L-tyrosinal, the spontaneous condensation of 2 L-tyrosinal units, and the subsequent reduction by the NmrA-like family domain-containing oxidoreductase FrzB. The cytochrome P450 monooxygenase FrzC then performs coupling between N10 and C1' to morph the piperazine into a 1,4-diazabicyclo[3.2.1]octane spiro-fused to a 2,5-cyclohexadienone. The dienone portion is further reduced to cyclohexanone by the flavin-dependent reductase FrzD. The methyltranserases (MTs) FrzE and FrzF are then involved in the methylation at the C10' amine and the C4 phenolic oxygen, respectively. The order of the two MTs appear to be interchangeable. Cleavage of the C9-N10' bond by the dioxygenase FrzG then leads to formation of a conjugated iminium. In addition to the oxidation of C9, an additional dehydrogenation between C7 and C8 can occur to give a likely shunt product. The next biosynthetic step is the intramolecular aldol condensation catalyzed by the newly identified aldolase FrzH to yield an aza-tricyclic product with the formation of a C9-C3' bond. The short-chain dehydrogenase/reductase FrzI then produces dephospho-(-)-FR901483 that is phosphorylated at C4'-OH into (-)-FR901483 by the phosphotransferase FrzJ. The polypeptide is Non-canonical nonribosomal peptide synthetase FrzA (Cladobotryum sp).